The primary structure comprises 292 residues: (S)-phenoxypropionate/alpha-ketoglutarate-dioxygenase (292 aa).

Fe cation is bound by residues His108 and Asp110. 2-oxoglutarate-binding residues include Thr135 and Trp247. His262 provides a ligand contact to Fe cation. A 2-oxoglutarate-binding site is contributed by Arg273.

Belongs to the TfdA dioxygenase family. As to quaternary structure, monomer. It depends on Fe cation as a cofactor. The cofactor is L-ascorbate.

It carries out the reaction (S)-2-(4-chloro-2-methylphenoxy)propanoate + 2-oxoglutarate + O2 = 2-methyl-4-chlorophenol + pyruvate + succinate + CO2. It catalyses the reaction (S)-(2,4-dichlorophenoxy)propanoate + 2-oxoglutarate + O2 = 2,4-dichlorophenol + pyruvate + succinate + CO2. The protein operates within xenobiotic degradation; 2-(2,4-dichlorophenoxy)propanoate degradation. Its activity is regulated as follows. Inhibited by divalent cations, most significantly by copper and nickel, and by diethylpyrocarbonate (DEPC). In terms of biological role, involved in the degradation of the phenoxypropionate herbicides. Catalyzes the enantiospecific cleavage of the ether bond in the herbicid S-dichlorprop ((S)-2-(2,4-dichlorophenoxy)propionate)(S-2,4-DP) and S-mecoprop ((S)-2-(4-chloro-2-methylphenoxy)propionate)(S-2,4-MCPP). It can also accept (RS)-2-(4-chlorophenoxy)propionate, (RS)-2-(m-chlorophenoxy)propionate and phenoxyacetate derivatives such as 2,4-dichlorophenoxyacetate (2,4-D), however it can only accept 2-oxoglutarate as oxygen acceptor. In Delftia acidovorans (Pseudomonas acidovorans), this protein is (S)-phenoxypropionate/alpha-ketoglutarate-dioxygenase.